A 396-amino-acid chain; its full sequence is MALRPNDVTLRLTPPLAAAARRNRRAAAGGVRVYAVASGAVSTKVENKKPFAPPREVHVQVTHSMPPQKIEIFKSLDDWARDNILSHLKPVEKCWQPQDFLPDPASDGFHDEVKELRERAKEIPDDYFVCLVGDMITEEALPTYQTMLNTLDGVRDETGASPTAWAVWTRAWTAEENRHGDLLNKYLYLTGRVDMRQIEKTIQYLIGSGMDPRTENNPYLGFIYTSFQERATFISHGNTARHAKDFGDLKLAQICGIIASDEKRHETAYTKIVEKLFEIDPDGTVLAFADMMKKKISMPAHLMFDGEDDKLFEHFSMVAQRLGVYTAKDYADILEFLVSRWKISDLTGLSSEGNKAQDYLCTLAARIRRLDERAQSRAKKAGTLPFSWVYGREVQL.

The transit peptide at 1–32 directs the protein to the chloroplast; sequence MALRPNDVTLRLTPPLAAAARRNRRAAAGGVR. Residues E138, E176, H179, E229, E262, and H265 each contribute to the Fe cation site.

Belongs to the fatty acid desaturase type 2 family. As to quaternary structure, homodimer. Fe(2+) is required as a cofactor.

It is found in the plastid. The protein localises to the chloroplast. The enzyme catalyses octadecanoyl-[ACP] + 2 reduced [2Fe-2S]-[ferredoxin] + O2 + 2 H(+) = (9Z)-octadecenoyl-[ACP] + 2 oxidized [2Fe-2S]-[ferredoxin] + 2 H2O. The protein operates within lipid metabolism; fatty acid metabolism. Functionally, converts stearoyl-ACP to oleoyl-ACP by introduction of a cis double bond between carbons 9 and 10 of the acyl chain. Required for the repression of the salicylic acid (SA) signaling pathway. This chain is Stearoyl-[acyl-carrier-protein] 9-desaturase 2, chloroplastic (SSI2), found in Oryza sativa subsp. indica (Rice).